The following is a 993-amino-acid chain: MPVFHTKTIEGILEPVAQQVSRLVILHEEAEDGNAVLDLTLPVGAVSRAVDNLIKVGYDTCHSSDDRILQADMPPALQRVEASSRLLEDACHMLRADPYSSVARKKLIEGARGILQGTSALLLSFDESEVRKIIRGCRKVLDYLAVAEVIESMDDLAQFVKDISPWLTRVSRNIDAREKELTHQVHREILLRCMDTVKTLSPIMICAMKIFIQITEESQRGQQEAAENRNYLAQRMTDEMNEIIRVLQLTTYDEDEWDSDNVTVMRKALSAAQSLLTSALDWLADSRGRAGATGEKAIRRIVDYSERIAARALPEDARLIRATVSDITSMTDSLCELRNQGGDSQGLASGCANRLKELVGTKEISGILPSALTNTQRTGGTHPAHTVTGRLEQALRWMDNPGVDDNGLGLQAVKAMTSEAGNLQPIYSHLQNVRKFVDLCVEIDRQADQLADLEHRGLGNPPAAHAIRNQLRNKLRELVDIMKKVITDRVVEDFADISTPLKQFVDAVYASPTIVNRELSFEEKAHNLDDHSSRCANTALLVAKCGPCKNKKTVEAIIEAANQVNAMTPQVIKAGKIRLHNDSDSANLHFDNLRREYSDVLNRLRSHVDDAIDTSDFIRASEQAMRQYTVYCENAIRNNEPQQMVDNTSQIARFGNRVLMTAKNEADNSEEPSFVHRVNNAARRLHSAIPPMVNQAKQVALNPRHGGNAQSWRDANEHLLSAVRQVGDAITGAGGSRPPSQNLLVESVPPKAPTSPIVHDRIYIREDIPTPPRPPPPVEISPPPRPPPPPETDDEEETRAFWERYPLLGASSQPILSAAHNLHQELRQWSSHENEIVAAAKRMAILMARLSQLVRGEGGTKKDLVDCAKAIADSSEEVTRLAVQLARQCTVIKMRMTLLQVCERIPTIATQLKILSTVKATMLGSQATIGPYGQPIDGSEEDEEAMQQLVLNAQNLMQSVKDTVRAAEAASIKIRTNSGLRLRWIRKPMWSNF.

2 repeat units span residues 258 to 364 (DSDN…TKEI) and 373 to 480 (TNTQ…ELVD). The segment at 258-480 (DSDNVTVMRK…LRNKLRELVD (223 aa)) is 2 X repeats. The tract at residues 730–797 (ITGAGGSRPP…PPPETDDEEE (68 aa)) is disordered. The span at 758-768 (VHDRIYIREDI) shows a compositional bias: basic and acidic residues. Residues 769–790 (PTPPRPPPPVEISPPPRPPPPP) are compositionally biased toward pro residues.

The protein belongs to the vinculin/alpha-catenin family. Exhibits self-association properties.

The protein localises to the cytoplasm. It localises to the cytoskeleton. The protein resides in the cell junction. It is found in the adherens junction. Its subcellular location is the cell membrane. Functionally, involved in cell adhesion. May be involved in the attachment of the actin-based microfilaments to the plasma membrane. The chain is Vinculin from Brugia malayi (Filarial nematode worm).